Reading from the N-terminus, the 430-residue chain is MDERLLGPPPPGGGRGGLGLVGAEPGGPGEPPGGGDPGGGSGGVPGGRGKQDIGDILQQIMTITDQSLDEAQAKKHALNCHRMKPALFSVLCEIKEKTGLSIRSSQEEEPVDPQLMRLDNMLLAEGVAGPEKGGGSAAAAAAAAASGGGVSPDNSIEHSDYRSKLAQIRHIYHSELEKYEQACNEFTTHVMNLLREQSRTRPVAPKEMERMVSIIHRKFSAIQMQLKQSTCEAVMILRSRFLDARRKRRNFSKQATEVLNEYFYSHLSNPYPSEEAKEELAKKCGITVSQVSNWFGNKRIRYKKNIGKFQEEANIYAVKTAVSVAQGGHSRTSSPTPPSSAGSGGSFNLSGSGDMFLGMPGLNGDSYPASQVESLRHSMGPGSYGDNIGGGQIYSPREIRANGGWQEAVTPSSVTSPTEGPGSVHSDTSN.

Residues 1-52 form a disordered region; sequence MDERLLGPPPPGGGRGGLGLVGAEPGGPGEPPGGGDPGGGSGGVPGGRGKQD. The segment covering 13–48 has biased composition (gly residues); that stretch reads GGRGGLGLVGAEPGGPGEPPGGGDPGGGSGGVPGGR. Residues 48–243 enclose the PBC domain; it reads RGKQDIGDIL…VMILRSRFLD (196 aa). The segment at 55-134 is PBC-A; the sequence is DILQQIMTIT…EGVAGPEKGG (80 aa). Residues S136, S151, and S159 each carry the phosphoserine modification. Residues 137–243 form a PBC-B region; that stretch reads AAAAAAAAAS…VMILRSRFLD (107 aa). The homeobox; TALE-type DNA-binding region spans 244 to 306; the sequence is ARRKRRNFSK…NKRIRYKKNI (63 aa). Disordered stretches follow at residues 327 to 347 and 375 to 430; these read GGHSRTSSPTPPSSAGSGGSF and LRHS…DTSN. S330 and S395 each carry phosphoserine. Residues 409–418 are compositionally biased toward polar residues; the sequence is VTPSSVTSPT.

Belongs to the TALE/PBX homeobox family. Forms heterodimers with MEIS1 and heterotrimers with MEIS1 and HOXA9. Interacts with PBXIP1.

It is found in the nucleus. Its function is as follows. Transcriptional activator that binds the sequence 5'-ATCAATCAA-3'. Activates transcription of PF4 in complex with MEIS1. This Mus musculus (Mouse) protein is Pre-B-cell leukemia transcription factor 2 (Pbx2).